Consider the following 229-residue polypeptide: PKHD-type hydroxylase BRADO4652 (229 aa).

One can recognise a Fe2OG dioxygenase domain in the interval Q78–S180. H98, D100, and H161 together coordinate Fe cation. R171 contributes to the 2-oxoglutarate binding site.

The cofactor is Fe(2+). L-ascorbate serves as cofactor.

This chain is PKHD-type hydroxylase BRADO4652, found in Bradyrhizobium sp. (strain ORS 278).